The sequence spans 948 residues: Putative JmjC domain-containing histone demethylation protein 1 (948 aa).

Positions 243-402 constitute a JmjC domain; sequence VSTTKLAYYV…PQLSIYNLEL (160 aa). T294 provides a ligand contact to substrate. Fe cation is bound by residues H297 and E299. A substrate-binding site is contributed by K314.

Belongs to the JHDM1 histone demethylase family. It depends on Fe(2+) as a cofactor.

The protein localises to the nucleus. The enzyme catalyses N(6),N(6)-dimethyl-L-lysyl(36)-[histone H3] + 2 2-oxoglutarate + 2 O2 = L-lysyl(36)-[histone H3] + 2 formaldehyde + 2 succinate + 2 CO2. Functionally, may be a histone demethylase that specifically demethylates 'Lys-36' of histone H3, thereby playing a central role in histone code. Represses transcriptional silencing by negatively affecting heterochromatin stability. In Schizosaccharomyces pombe (strain 972 / ATCC 24843) (Fission yeast), this protein is Putative JmjC domain-containing histone demethylation protein 1 (jhd1).